A 647-amino-acid chain; its full sequence is Nucleolar GTP-binding protein 1 (647 aa).

The 173-residue stretch at 168–340 (RTLLICGYPN…VRNKACEKLL (173 aa)) folds into the OBG-type G domain. Residues 174–181 (GYPNVGKS), 220–224 (DTPGI), and 288–291 (NKTD) each bind GTP. Ser-563 bears the Phosphoserine mark. Positions 594-647 (ADGSMRSKADRMAKMERRERNRHAKQGESDRHNAVSLSKHLFSGKRGVGKTDFR) are disordered. Positions 598 to 626 (MRSKADRMAKMERRERNRHAKQGESDRHN) are enriched in basic and acidic residues.

It belongs to the TRAFAC class OBG-HflX-like GTPase superfamily. OBG GTPase family. NOG subfamily. In terms of assembly, associated with nucleolar and cytoplasmic pre-60S particles. Directly interacts with RLP24.

The protein localises to the nucleus. It is found in the nucleolus. Involved in the biogenesis of the 60S ribosomal subunit. This is Nucleolar GTP-binding protein 1 (NOG1) from Saccharomyces cerevisiae (strain ATCC 204508 / S288c) (Baker's yeast).